A 204-amino-acid polypeptide reads, in one-letter code: Large ribosomal subunit protein bL25 (204 aa).

This sequence belongs to the bacterial ribosomal protein bL25 family. CTC subfamily. In terms of assembly, part of the 50S ribosomal subunit; part of the 5S rRNA/L5/L18/L25 subcomplex. Contacts the 5S rRNA. Binds to the 5S rRNA independently of L5 and L18.

Functionally, this is one of the proteins that binds to the 5S RNA in the ribosome where it forms part of the central protuberance. The sequence is that of Large ribosomal subunit protein bL25 from Burkholderia pseudomallei (strain 668).